The following is a 649-amino-acid chain: Threonine--tRNA ligase (649 aa).

A TGS domain is found at 1 to 60; that stretch reads MHVTLPDGKQLDLQPGATALDAAKAIGPRLAQDALGATANGELTDLMTPLSDGASITLIT. Positions 248–544 are catalytic; it reads DHRKLGKELE…LIEHYAGDFP (297 aa). Residues cysteine 341, histidine 392, and histidine 521 each contribute to the Zn(2+) site.

The protein belongs to the class-II aminoacyl-tRNA synthetase family. Homodimer. Zn(2+) is required as a cofactor.

Its subcellular location is the cytoplasm. The enzyme catalyses tRNA(Thr) + L-threonine + ATP = L-threonyl-tRNA(Thr) + AMP + diphosphate + H(+). Its function is as follows. Catalyzes the attachment of threonine to tRNA(Thr) in a two-step reaction: L-threonine is first activated by ATP to form Thr-AMP and then transferred to the acceptor end of tRNA(Thr). Also edits incorrectly charged L-seryl-tRNA(Thr). This Deinococcus radiodurans (strain ATCC 13939 / DSM 20539 / JCM 16871 / CCUG 27074 / LMG 4051 / NBRC 15346 / NCIMB 9279 / VKM B-1422 / R1) protein is Threonine--tRNA ligase.